The chain runs to 137 residues: Acidic phospholipase A2 1 (137 aa).

The signal sequence occupies residues 1 to 11 (LVAVCVSLLGA). A propeptide spanning residues 12-19 (ANIPPQPL) is cleaved from the precursor. 7 disulfide bridges follow: Cys30/Cys89, Cys44/Cys136, Cys46/Cys62, Cys61/Cys117, Cys68/Cys110, Cys78/Cys103, and Cys96/Cys108. Residues Tyr45, Gly47, and Gly49 each coordinate Ca(2+). Tridecanoate contacts are provided by Gly49 and His65. His65 is an active-site residue. Asp66 serves as a coordination point for Ca(2+). The active site involves Asp111.

Monomer. The cofactor is Ca(2+). In terms of tissue distribution, expressed by the venom gland.

Its subcellular location is the secreted. It carries out the reaction a 1,2-diacyl-sn-glycero-3-phosphocholine + H2O = a 1-acyl-sn-glycero-3-phosphocholine + a fatty acid + H(+). Snake venom phospholipase A2 (PLA2) that shows anticoagulant and neurotoxic activities. PLA2 catalyzes the calcium-dependent hydrolysis of the 2-acyl groups in 3-sn-phosphoglycerides. This Bungarus caeruleus (Indian krait) protein is Acidic phospholipase A2 1.